The sequence spans 443 residues: KH domain-containing, RNA-binding, signal transduction-associated protein 1 (443 aa).

The disordered stretch occupies residues Met1–Ala94. A phosphoserine mark is found at Ser18 and Ser20. Residue Lys21 is modified to N6-acetyllysine. Ser29 carries the phosphoserine modification. Position 33 is a phosphothreonine (Thr33). Arg45 and Arg52 each carry asymmetric dimethylarginine; by PRMT1. Ser58 carries the phosphoserine; by MAPK1 modification. The segment covering Thr61–Pro72 has biased composition (pro residues). 2 positions are modified to phosphothreonine; by MAPK1: Thr71 and Thr84. Over residues Ser81–Ala94 the composition is skewed to low complexity. Residues Lys96 and Lys102 each participate in a glycyl lysine isopeptide (Lys-Gly) (interchain with G-Cter in SUMO2) cross-link. The involved in homodimerization stretch occupies residues Glu100–Met260. Ser113 is subject to Phosphoserine. Residue Lys139 forms a Glycyl lysine isopeptide (Lys-Gly) (interchain with G-Cter in SUMO2) linkage. Ser150 is modified (phosphoserine). The 27-residue stretch at Asn171–Val197 folds into the KH domain. Residue Lys175 is modified to N6-acetyllysine; alternate. A Glycyl lysine isopeptide (Lys-Gly) (interchain with G-Cter in SUMO2); alternate cross-link involves residue Lys175. Residue Thr183 is modified to Phosphothreonine. A disordered region spans residues Pro280 to Thr317. Omega-N-methylarginine is present on residues Arg282, Arg284, and Arg291. The span at Gly283 to Ala293 shows a compositional bias: low complexity. Arg304 is subject to Asymmetric dimethylarginine. A compositionally biased stretch (low complexity) spans Gly307–Gly316. 2 positions are modified to omega-N-methylarginine; by PRMT1: Arg310 and Arg315. Dimethylated arginine; alternate is present on Arg320. An Omega-N-methylarginine; by PRMT1; alternate modification is found at Arg320. Arg325 bears the Omega-N-methylarginine; by PRMT1 mark. Residues Gly326–Pro345 form a disordered region. Arg331 and Arg340 each carry dimethylated arginine; alternate. Arg331 and Arg340 each carry omega-N-methylarginine; by PRMT1; alternate. An Asymmetric dimethylarginine; alternate modification is found at Arg331. The interval Gly351 to Tyr443 is interaction with HNRNPA1. At Tyr387 the chain carries Phosphotyrosine. Ser390 is modified (phosphoserine). The interaction with ZBTB7A stretch occupies residues Gly400–Arg420. The interval Tyr411–Tyr443 is disordered. Residue Lys432 forms a Glycyl lysine isopeptide (Lys-Gly) (interchain with G-Cter in SUMO2) linkage. Residues Ala434–Tyr443 show a composition bias toward basic and acidic residues. 3 positions are modified to phosphotyrosine; by PTK6: Tyr435, Tyr440, and Tyr443.

This sequence belongs to the KHDRBS family. Self-associates to form homooligomers when bound to RNA, oligomerization appears to be limited when binding to proteins. Forms a trimeric complex in the nucleus consisting of BANP, HDAC6 and KHDRBS1/SAM68; HDAC6 keeps KHDRBS1 in a deacetylated state which inhibits the inclusion of CD44 alternate exons. The complex is disrupted by MAPK1/MAPK3-mediated phosphorylation of BANP which results in BANP export to the cytoplasm. This facilitates acetylation of KHDRBS1 and CD44 variant exon inclusion. Interacts with KHDRBS3/SLIM-2 and KHDRBS2/SLIM-1; heterooligomer formation of KHDRBS family proteins may modulate RNA substrate specificity. Interacts with RASA1, FYN, GRB2, PLCG1, SRC, CBP and PRMT1. Interacts with PTK6 (via SH3 and SH2 domains). Forms a complex with ILF2, ILF3, YLPM1, RBMX, NCOA5 and PPP1CA. Binds WBP4/FBP21 (via WW domains), FNBP4/FBP30 (via WW domains). Interacts (via Arg/Gly-rich-flanked Pro-rich regions) with FYN (via the SH3 domain). Interacts with APC, HNRNPA1. Interacts with the non-receptor tyrosine kinase SRMS; the interaction leads to phosphorylation of KHDRBS1. Interacts with ZBTB7A; negatively regulates KHDRBS1 splicing activity toward BCL2L1. In terms of processing, tyrosine phosphorylated by several non-receptor tyrosine kinases including LCK, FYN and JAK3. Also tyrosine phosphorylated by the non-receptor tyrosine kinase SRMS in an EGF-dependent manner. Phosphorylation by PTK6 negatively regulates its RNA binding ability. Phosphorylation by PTK6 at Tyr-440 dictates the nuclear localization of KHDRBS1. Phosphorylation by MAPK1 at Ser-58, Thr-71 and Thr-84 regulates CD44 alternative splicing by promoting CD44 exon v5 inclusion. Acetylated. Positively correlates with ability to bind RNA. Deacetylated by HDAC6; this regulates alternative splicing by inhibiting the inclusion of CD44 alternate exons. Post-translationally, arginine methylation is required for nuclear localization. Inhibits interaction with Src-like SH3 domains, but not interaction with WW domains of WBP4/FBP21 and FNBP4/FBP30. In terms of tissue distribution, in adult cerebellum expressed in most neuronal cell populations, specifically in cerebellar granule cells of the internal granular layer, ROR(alpha)-positive Purkinje cells, internal granular layer and molecular layer interneurons (at protein level).

It localises to the nucleus. It is found in the cytoplasm. The protein resides in the membrane. Functionally, recruited and tyrosine phosphorylated by several receptor systems, for example the T-cell, leptin and insulin receptors. Once phosphorylated, functions as an adapter protein in signal transduction cascades by binding to SH2 and SH3 domain-containing proteins. Role in G2-M progression in the cell cycle. Represses CBP-dependent transcriptional activation apparently by competing with other nuclear factors for binding to CBP. Also acts as a putative regulator of mRNA stability and/or translation rates and mediates mRNA nuclear export. Positively regulates the association of constitutive transport element (CTE)-containing mRNA with large polyribosomes and translation initiation. May not be involved in the nucleocytoplasmic export of unspliced (CTE)-containing RNA species. RNA-binding protein that plays a role in the regulation of alternative splicing and influences mRNA splice site selection and exon inclusion. Binds to RNA containing 5'-[AU]UAA-3' as a bipartite motif spaced by more than 15 nucleotides. Binds poly(A). In cooperation with HNRNPA1 modulates alternative splicing of BCL2L1 by promoting splicing toward isoform Bcl-X(S), and of SMN1. Can regulate CD44 alternative splicing in a Ras pathway-dependent manner. Can regulate alternative splicing of NRXN1 and NRXN3 in the laminin G-like domain 6 containing the evolutionary conserved neurexin alternative spliced segment 4 (AS4) involved in neurexin selective targeting to postsynaptic partners. In a neuronal activity-dependent manner cooperates synergistically with KHDRBS2/SLIM-1 in regulation of NRXN1 exon skipping at AS4. The cooperation with KHDRBS2/SLIM-1 is antagonistic for regulation of NXRN3 alternative splicing at AS4. This chain is KH domain-containing, RNA-binding, signal transduction-associated protein 1, found in Mus musculus (Mouse).